Consider the following 214-residue polypeptide: Large ribosomal subunit protein uL4 (214 aa).

The disordered stretch occupies residues 56–86 (THKVKNRAEVSGTGKKPWKQKSTGKARAGSK). Positions 71-85 (KPWKQKSTGKARAGS) are enriched in basic residues.

Belongs to the universal ribosomal protein uL4 family. As to quaternary structure, part of the 50S ribosomal subunit.

One of the primary rRNA binding proteins, this protein initially binds near the 5'-end of the 23S rRNA. It is important during the early stages of 50S assembly. It makes multiple contacts with different domains of the 23S rRNA in the assembled 50S subunit and ribosome. In terms of biological role, forms part of the polypeptide exit tunnel. The polypeptide is Large ribosomal subunit protein uL4 (Mesomycoplasma hyopneumoniae (strain 232) (Mycoplasma hyopneumoniae)).